A 240-amino-acid chain; its full sequence is 1-(5-phosphoribosyl)-5-[(5-phosphoribosylamino)methylideneamino] imidazole-4-carboxamide isomerase (240 aa).

Asp8 acts as the Proton acceptor in catalysis. Asp129 acts as the Proton donor in catalysis.

The protein belongs to the HisA/HisF family.

It is found in the cytoplasm. The enzyme catalyses 1-(5-phospho-beta-D-ribosyl)-5-[(5-phospho-beta-D-ribosylamino)methylideneamino]imidazole-4-carboxamide = 5-[(5-phospho-1-deoxy-D-ribulos-1-ylimino)methylamino]-1-(5-phospho-beta-D-ribosyl)imidazole-4-carboxamide. It functions in the pathway amino-acid biosynthesis; L-histidine biosynthesis; L-histidine from 5-phospho-alpha-D-ribose 1-diphosphate: step 4/9. The chain is 1-(5-phosphoribosyl)-5-[(5-phosphoribosylamino)methylideneamino] imidazole-4-carboxamide isomerase from Listeria monocytogenes serotype 4b (strain CLIP80459).